The sequence spans 306 residues: Pantothenate kinase (306 aa).

ATP is bound at residue 90–97; sequence GSVAVGKS.

It belongs to the prokaryotic pantothenate kinase family.

Its subcellular location is the cytoplasm. The catalysed reaction is (R)-pantothenate + ATP = (R)-4'-phosphopantothenate + ADP + H(+). It functions in the pathway cofactor biosynthesis; coenzyme A biosynthesis; CoA from (R)-pantothenate: step 1/5. The chain is Pantothenate kinase from Listeria monocytogenes serotype 4a (strain HCC23).